The following is a 458-amino-acid chain: Argininosuccinate lyase (458 aa).

This sequence belongs to the lyase 1 family. Argininosuccinate lyase subfamily.

The protein localises to the cytoplasm. The enzyme catalyses 2-(N(omega)-L-arginino)succinate = fumarate + L-arginine. It functions in the pathway amino-acid biosynthesis; L-arginine biosynthesis; L-arginine from L-ornithine and carbamoyl phosphate: step 3/3. This chain is Argininosuccinate lyase, found in Vibrio cholerae serotype O1 (strain ATCC 39541 / Classical Ogawa 395 / O395).